Consider the following 421-residue polypeptide: Functional amyloid transporter FapF (421 aa).

The N-terminal stretch at 1–24 is a signal peptide; it reads MTQTLSLRAVLCATTLVSPFLAQA. Residues 23–64 are a coiled coil; the sequence is QAATESEVEALKKELLELRQRYEAQQNALMVLEQRVRQVEAQ.

This sequence belongs to the amyloid transporter (TC 9.B.153) family.

It is found in the secreted. The protein localises to the cell surface. Its subcellular location is the cell outer membrane. Functionally, transports fibril components across the outer membrane. Upon overexpression of the endogenous six-gene locus (fapA-fapF), cells form large clumps during liquid growth, make large amounts of biofilm and produce amyloid fibrils. In Pseudomonas aeruginosa (strain ATCC 15692 / DSM 22644 / CIP 104116 / JCM 14847 / LMG 12228 / 1C / PRS 101 / PAO1), this protein is Functional amyloid transporter FapF.